The primary structure comprises 526 residues: Cytochrome P450 4e2 (526 aa).

The heme site is built by Glu307 and Cys444.

Belongs to the cytochrome P450 family. Heme serves as cofactor.

Its subcellular location is the endoplasmic reticulum membrane. It is found in the microsome membrane. Its function is as follows. May be involved in the metabolism of insect hormones and in the breakdown of synthetic insecticides. The sequence is that of Cytochrome P450 4e2 (Cyp4e2) from Drosophila melanogaster (Fruit fly).